The sequence spans 947 residues: Bifunctional glutamine synthetase adenylyltransferase/adenylyl-removing enzyme (947 aa).

The segment at 1–440 (MTPLSSPLSQ…VFNELIGDDE (440 aa)) is adenylyl removase. Residues 450 to 947 (SEPWREVWQD…ASWRKWLVAV (498 aa)) are adenylyl transferase.

The protein belongs to the GlnE family. It depends on Mg(2+) as a cofactor.

It carries out the reaction [glutamine synthetase]-O(4)-(5'-adenylyl)-L-tyrosine + phosphate = [glutamine synthetase]-L-tyrosine + ADP. The catalysed reaction is [glutamine synthetase]-L-tyrosine + ATP = [glutamine synthetase]-O(4)-(5'-adenylyl)-L-tyrosine + diphosphate. In terms of biological role, involved in the regulation of glutamine synthetase GlnA, a key enzyme in the process to assimilate ammonia. When cellular nitrogen levels are high, the C-terminal adenylyl transferase (AT) inactivates GlnA by covalent transfer of an adenylyl group from ATP to specific tyrosine residue of GlnA, thus reducing its activity. Conversely, when nitrogen levels are low, the N-terminal adenylyl removase (AR) activates GlnA by removing the adenylyl group by phosphorolysis, increasing its activity. The regulatory region of GlnE binds the signal transduction protein PII (GlnB) which indicates the nitrogen status of the cell. This chain is Bifunctional glutamine synthetase adenylyltransferase/adenylyl-removing enzyme, found in Salmonella typhimurium (strain LT2 / SGSC1412 / ATCC 700720).